A 157-amino-acid chain; its full sequence is Probable succinate transporter subunit YjjB (157 aa).

The next 4 helical transmembrane spans lie at 2–22, 55–75, 87–107, and 129–149; these read GIISFIFALAEDMLLAAIPAV, AGFNIEWATFLAALLVGSIGI, IFTVAAVIPMFPGISAYTAMI, and FLKASSIVGALSIGLSIPGLW.

It belongs to the ThrE exporter (TC 2.A.79) family. As to quaternary structure, the transporter is composed of YjjB and YjjP.

It is found in the cell inner membrane. Involved in succinate export with YjjP. Both proteins are required for export. In Klebsiella pneumoniae subsp. pneumoniae (strain ATCC 700721 / MGH 78578), this protein is Probable succinate transporter subunit YjjB.